Here is a 432-residue protein sequence, read N- to C-terminus: Adenylosuccinate synthetase (432 aa).

GTP is bound by residues 13-19 and 41-43; these read GDEGKGK and GHT. Asp-14 (proton acceptor) is an active-site residue. 2 residues coordinate Mg(2+): Asp-14 and Gly-41. IMP contacts are provided by residues 14–17, 39–42, Thr-130, Arg-144, Gln-225, Thr-240, and Arg-304; these read DEGK and NAGH. His-42 acts as the Proton donor in catalysis. 300 to 306 lines the substrate pocket; it reads ATTGRSR. GTP contacts are provided by residues Arg-306, 332–334, and 415–417; these read KLD and STG.

Belongs to the adenylosuccinate synthetase family. Homodimer. Requires Mg(2+) as cofactor.

Its subcellular location is the cytoplasm. The catalysed reaction is IMP + L-aspartate + GTP = N(6)-(1,2-dicarboxyethyl)-AMP + GDP + phosphate + 2 H(+). The protein operates within purine metabolism; AMP biosynthesis via de novo pathway; AMP from IMP: step 1/2. Its function is as follows. Plays an important role in the de novo pathway of purine nucleotide biosynthesis. Catalyzes the first committed step in the biosynthesis of AMP from IMP. This is Adenylosuccinate synthetase from Yersinia pseudotuberculosis serotype O:1b (strain IP 31758).